The following is a 207-amino-acid chain: dTTP/UTP pyrophosphatase (207 aa).

D79 functions as the Proton acceptor in the catalytic mechanism.

The protein belongs to the Maf family. YhdE subfamily. Requires a divalent metal cation as cofactor.

It localises to the cytoplasm. The catalysed reaction is dTTP + H2O = dTMP + diphosphate + H(+). It carries out the reaction UTP + H2O = UMP + diphosphate + H(+). Its function is as follows. Nucleoside triphosphate pyrophosphatase that hydrolyzes dTTP and UTP. May have a dual role in cell division arrest and in preventing the incorporation of modified nucleotides into cellular nucleic acids. This chain is dTTP/UTP pyrophosphatase, found in Nitrobacter winogradskyi (strain ATCC 25391 / DSM 10237 / CIP 104748 / NCIMB 11846 / Nb-255).